The following is an 875-amino-acid chain: MKTTAQIRQSYLDFFHSKGHQVVESSSLVPHNDPTLLFTNAGMNQFKDVFLGMDKRPYTRATTAQRCVRAGGKHNDLENVGYTARHHTFFEMLGNFSFGDYFKHDAIAYGWEFLTSPQWLGLPKEKLYVTVYETDDEAYDIWNKEVGVPADHIIRIGDNKGAPYASDNFWAMGDTGPCGPCTEIFYDHGEHIWGGLPGTPEEDGDRYIEIWNIVFMQFNRHADGTMEKLPKPSVDTGMGLERIAAVLQHVNSNYDIDIFQTLIKKVAQLTGEKDLTNKSLRVIADHIRSCAYLIADGVMPSNEGRGYVLRRIIRRAVRHGHLLGAKETFFYKLVPTLADVMEHAGEIVNQKRALIEKTLKAEEEQFARTLERGLLLLDDALSQVKDNVLSGDVAFKLYDTYGFPLDLTADVCRERNITIDEKGFEREMQAQRARAQASSNFGVDYNNVIKVDGQTEFKGYETTSLSSAKVVALFTDGKSVERVQSGENAVVILDRTPFYGESGGQIGDTGYIATDLAAFRINDTQKYGQVTGHIGQLESGSLSVGDTVSAQVDTERRLAVAANHSATHLLHAALRKVLGDHVAQKGSLVSESALRFDFIQPEAISKEQIIEIEAIVNRQIRENISVTTEVMDIEAAKQKGAMALFGEKYGDLVRVVGMTGFSIELCGGTHVKRTGDIGLFKVVSESAIAAGIRRIEAVTAENAINWLNNQQNILNQSADLLKSDTASLVEKIQQLQDKAKKAEKELQQLKEKAAMQAGSDLAKSAVKINDISVIVQQLDGIETKSLRVMVDDLKNQLGSGVIVFASVVEDKVNLIVGVTADLTGKVKAGELVNLMAQQVGGKGGGRPDMAMAGGSQPENVGAALSACSDWLESNL.

Residues H564, H568, C666, and H670 each coordinate Zn(2+).

This sequence belongs to the class-II aminoacyl-tRNA synthetase family. The cofactor is Zn(2+).

It is found in the cytoplasm. It carries out the reaction tRNA(Ala) + L-alanine + ATP = L-alanyl-tRNA(Ala) + AMP + diphosphate. Its function is as follows. Catalyzes the attachment of alanine to tRNA(Ala) in a two-step reaction: alanine is first activated by ATP to form Ala-AMP and then transferred to the acceptor end of tRNA(Ala). Also edits incorrectly charged Ser-tRNA(Ala) and Gly-tRNA(Ala) via its editing domain. This chain is Alanine--tRNA ligase, found in Mannheimia succiniciproducens (strain KCTC 0769BP / MBEL55E).